Here is a 604-residue protein sequence, read N- to C-terminus: Replication protein A 70 kDa DNA-binding subunit B (604 aa).

The OB DNA-binding region spans 170–256 (WTIKVRVTNK…QNDYEMTLNE (87 aa)). Residues 468 to 488 (CKTCNKKVTEAMDSGYWCESC) form a C4-type zinc finger.

Belongs to the replication factor A protein 1 family. In terms of assembly, heterotrimer of RPA1, RPA2 and RPA3 (canonical replication protein A complex).

The protein localises to the nucleus. In terms of biological role, component of the replication protein A complex (RPA) required for DNA recombination, repair and replication. The activity of RPA is mediated by single-stranded DNA binding and protein interactions. Probably involved in repair of double-strand DNA breaks (DSBs) induced by genotoxic stresses. The polypeptide is Replication protein A 70 kDa DNA-binding subunit B (RPA1B) (Arabidopsis thaliana (Mouse-ear cress)).